The sequence spans 147 residues: Protein-export protein SecB 2 (147 aa).

It belongs to the SecB family. As to quaternary structure, homotetramer, a dimer of dimers. One homotetramer interacts with 1 SecA dimer.

It localises to the cytoplasm. In terms of biological role, one of the proteins required for the normal export of preproteins out of the cell cytoplasm. It is a molecular chaperone that binds to a subset of precursor proteins, maintaining them in a translocation-competent state. It also specifically binds to its receptor SecA. The polypeptide is Protein-export protein SecB 2 (Francisella tularensis subsp. holarctica (strain FTNF002-00 / FTA)).